The sequence spans 295 residues: Glycine N-methyltransferase (295 aa).

N-acetylvaline is present on valine 2. (6S)-5-methyl-5,6,7,8-tetrahydrofolate-binding residues include serine 4 and tyrosine 6. Serine 10 carries the post-translational modification Phosphoserine. Residues tyrosine 22, tryptophan 31, tyrosine 34, and arginine 41 each contribute to the S-adenosyl-L-methionine site. A Phosphotyrosine modification is found at tyrosine 34. The residue at position 46 (lysine 46) is an N6-succinyllysine. S-adenosyl-L-methionine-binding positions include alanine 65, 86–88 (DAS), 117–118 (NW), 139–142 (LGNS), and arginine 178. N6-succinyllysine is present on residues lysine 193, lysine 198, and lysine 203. Histidine 217 contacts (6S)-5-methyl-5,6,7,8-tetrahydrofolate. Tyrosine 223 contributes to the S-adenosyl-L-methionine binding site. Arginine 242 provides a ligand contact to (6S)-5-methyl-5,6,7,8-tetrahydrofolate.

It belongs to the class I-like SAM-binding methyltransferase superfamily. Glycine N-methyltransferase family. As to quaternary structure, homotetramer. As to expression, expressed only in liver, pancreas, and prostate.

It is found in the cytoplasm. The catalysed reaction is glycine + S-adenosyl-L-methionine = sarcosine + S-adenosyl-L-homocysteine + H(+). With respect to regulation, inhibited by 5-methyltetrahydrofolate monoglutamate and by 5-methyltetrahydrofolate pentaglutamate, inhibition is much more effective by the pentaglutamate form than by the monoglutamate form. Two molecules of 5-methyltetrahydrofolate are bound per tetramer. The binding sites are localized between subunits. Inhibitor binding may preclude movements of the polypeptide chain that are necessary for enzyme activity. Catalyzes the methylation of glycine by using S-adenosylmethionine (AdoMet) to form N-methylglycine (sarcosine) with the concomitant production of S-adenosylhomocysteine (AdoHcy), a reaction regulated by the binding of 5-methyltetrahydrofolate. Plays an important role in the regulation of methyl group metabolism by regulating the ratio between S-adenosyl-L-methionine and S-adenosyl-L-homocysteine. The sequence is that of Glycine N-methyltransferase from Homo sapiens (Human).